The chain runs to 478 residues: 3-isopropylmalate dehydratase large subunit (478 aa).

Residues Cys-347, Cys-407, and Cys-410 each contribute to the [4Fe-4S] cluster site.

The protein belongs to the aconitase/IPM isomerase family. LeuC type 1 subfamily. In terms of assembly, heterodimer of LeuC and LeuD. [4Fe-4S] cluster is required as a cofactor.

It carries out the reaction (2R,3S)-3-isopropylmalate = (2S)-2-isopropylmalate. It participates in amino-acid biosynthesis; L-leucine biosynthesis; L-leucine from 3-methyl-2-oxobutanoate: step 2/4. In terms of biological role, catalyzes the isomerization between 2-isopropylmalate and 3-isopropylmalate, via the formation of 2-isopropylmaleate. The protein is 3-isopropylmalate dehydratase large subunit of Prochlorococcus marinus (strain MIT 9303).